The primary structure comprises 84 residues: Small ribosomal subunit protein uS17 (84 aa).

Belongs to the universal ribosomal protein uS17 family. In terms of assembly, part of the 30S ribosomal subunit.

One of the primary rRNA binding proteins, it binds specifically to the 5'-end of 16S ribosomal RNA. This Caldanaerobacter subterraneus subsp. tengcongensis (strain DSM 15242 / JCM 11007 / NBRC 100824 / MB4) (Thermoanaerobacter tengcongensis) protein is Small ribosomal subunit protein uS17.